The primary structure comprises 168 residues: MNLRLELTRFLNLCFALASAFMFWKGLSIVTNSHSPIVVVLSGSMEPAFQRGDILFLWNRNELNKVGDVVVYEVDNKEIPIVHRVLREHVDETSGKQLLLTKGDNNAGNDIPLYAKRKIYLHKEKDIVGTVKGYIPQLGYITIWISENKYAKMGLMGLIALSALLSNE.

Residues 1 to 12 (MNLRLELTRFLN) lie on the Cytoplasmic side of the membrane. Residues 13 to 30 (LCFALASAFMFWKGLSIV) form a helical; Signal-anchor for type II membrane protein membrane-spanning segment. The Lumenal portion of the chain corresponds to 31 to 168 (TNSHSPIVVV…IALSALLSNE (138 aa)). Catalysis depends on charge relay system residues Ser-44, His-83, and Asp-110. The interval 154–165 (GLMGLIALSALL) is C-terminal short (CTS) helix.

This sequence belongs to the peptidase S26B family. In terms of assembly, component of the signal peptidase complex (SPC) composed of a catalytic subunit SEC11 and three accessory subunits SPC1, SPC2 and SPC3. The complex induces a local thinning of the ER membrane which is used to measure the length of the signal peptide (SP) h-region of protein substrates. This ensures the selectivity of the complex towards h-regions shorter than 18-20 amino acids. SPC associates with the translocon complex.

The protein localises to the endoplasmic reticulum membrane. It carries out the reaction Cleavage of hydrophobic, N-terminal signal or leader sequences from secreted and periplasmic proteins.. Functionally, catalytic component of the signal peptidase complex (SPC) which catalyzes the cleavage of N-terminal signal sequences from nascent proteins as they are translocated into the lumen of the endoplasmic reticulum. Specifically cleaves N-terminal signal peptides that contain a hydrophobic alpha-helix (h-region) shorter than 18-20 amino acids. The polypeptide is Signal peptidase complex catalytic subunit SEC11 (SEC11) (Lachancea thermotolerans (strain ATCC 56472 / CBS 6340 / NRRL Y-8284) (Yeast)).